Reading from the N-terminus, the 256-residue chain is Acetylglutamate kinase (256 aa).

Substrate is bound by residues 40 to 41 (GG), Arg62, and Asn154.

This sequence belongs to the acetylglutamate kinase family. ArgB subfamily.

It localises to the cytoplasm. It catalyses the reaction N-acetyl-L-glutamate + ATP = N-acetyl-L-glutamyl 5-phosphate + ADP. Its pathway is amino-acid biosynthesis; L-arginine biosynthesis; N(2)-acetyl-L-ornithine from L-glutamate: step 2/4. Catalyzes the ATP-dependent phosphorylation of N-acetyl-L-glutamate. This is Acetylglutamate kinase from Staphylococcus aureus (strain bovine RF122 / ET3-1).